We begin with the raw amino-acid sequence, 712 residues long: Translation initiation factor eIF2B subunit epsilon (712 aa).

The segment at 1–20 (MAGKKGQKKSGLGNHGKNSD) is disordered. Phosphoserine occurs at positions 478, 481, 507, 525, 538, and 707. The 172-residue stretch at 539–710 (EFEDEDFEKE…QNADEESSSE (172 aa)) folds into the W2 domain.

The protein belongs to the eIF-2B gamma/epsilon subunits family. In terms of assembly, component of the translation initiation factor 2B (eIF2B) complex which is a heterodecamer of two sets of five different subunits: alpha, beta, gamma, delta and epsilon. Subunits alpha, beta and delta comprise a regulatory subcomplex and subunits epsilon and gamma comprise a catalytic subcomplex. Within the complex, the hexameric regulatory complex resides at the center, with the two heterodimeric catalytic subcomplexes bound on opposite sides.

It is found in the cytoplasm. It localises to the cytosol. In terms of biological role, acts as a catalytic component of the translation initiation factor 2B (eIF2B) complex, which catalyzes the exchange of GDP for GTP on eukaryotic initiation factor 2 (eIF2) and is regulated by phosphorylated eIF2. Its guanine nucleotide exchange factor activity is repressed when bound to eIF2 complex phosphorylated on the alpha subunit, thereby limiting the amount of methionyl-initiator methionine tRNA available to the ribosome and consequently global translation is repressed. It activates the synthesis of GCN4 in yeast under amino acid starvation conditions by suppressing the inhibitory effects of multiple AUG codons present in the leader of GCN4 mRNA. It may promote either repression or activation of GCN4 expression depending on amino acid availability. GCD6 and GCD7 repress GCN4 expression at the translational level by ensuring that ribosomes which have translated UORF1 will reinitiate at UORF2, -3, or -4 and thus fail to reach the GCN4 start site. The protein is Translation initiation factor eIF2B subunit epsilon (GCD6) of Saccharomyces cerevisiae (strain ATCC 204508 / S288c) (Baker's yeast).